We begin with the raw amino-acid sequence, 436 residues long: Glutamyl-tRNA reductase (436 aa).

Residues 49–52, S109, 114–116, and Q120 each bind substrate; these read TCNR and EGQ. The Nucleophile role is filled by C50. NADP(+) is bound at residue 198–203; it reads GAGRMS.

Belongs to the glutamyl-tRNA reductase family. In terms of assembly, homodimer.

The enzyme catalyses (S)-4-amino-5-oxopentanoate + tRNA(Glu) + NADP(+) = L-glutamyl-tRNA(Glu) + NADPH + H(+). It functions in the pathway porphyrin-containing compound metabolism; protoporphyrin-IX biosynthesis; 5-aminolevulinate from L-glutamyl-tRNA(Glu): step 1/2. It participates in porphyrin-containing compound metabolism; chlorophyll biosynthesis. Catalyzes the NADPH-dependent reduction of glutamyl-tRNA(Glu) to glutamate 1-semialdehyde (GSA). The chain is Glutamyl-tRNA reductase from Prochlorococcus marinus (strain MIT 9313).